A 1481-amino-acid polypeptide reads, in one-letter code: MQRSPLEKASVVSKLFFSWTRPILKKGYRQRLELSDIYHISSSDSADNLSEKLEREWDRELASKKNPKLINALRRCFFWRFMFYGIILYLGEVTKAVQPLLLGRIIASYDPDNKVERSIAIYLGIGLCLLFIVRTLLLHPAIFGLHHIGMQMRIAMFSLIYKKTLKLSSRVLDKISIGQLVSLLSNNLNKFDEGLALAHFVWIAPLQVTLLMGLLWELLQAFTFCGLAFLVVLAFLQAGLGKMMMKYRDQRAGKINERLVITSEIIENIQSVKAYCWEEAMEKIIENLRQTELKLTRKAAYVRYLNSSAFFFSGFFVVFLSVLPYALLKGIILRKIFTTISFCIVLRMAVTRQFPWAVQTWYDSLGAINKIQDFLQKQEYKTLEYNLTTTDVVMENVTAYWEEGFSKLFEKAKENNNNRKISNGDNNLFFSNLLLGAPVLKDISFKIERGQLMAVAGSTGAGKTSLLMMIMGELEPSEGKIKHSGRISFCSQYSWIMPGTIKDNIIFGVSYDEYRYRSVIKACQLEEDISKFAEKDNIVLGEGGITLSGGQRARISLARAVYKDADLYLLDSPFGYLDVLTEKEIFESCVCKLMANKTRILVTSKMEHLKQADKILILHEGSIYFYGTFSELQNQRPDFSSKLMGCDTFDQFTAERRNSIITETLRRFSLEGDTSVSWNETKKPSFKQTGEFGEKRKNSILNSINSKRKFSVAQKTSLQMNGIEETSDEPLERKLSLVPHSEPGEGILPRSNAVNSGPTFLGGRRQSVLNLMTCSSVNQGQSIHRKTATSTRKMSLAPQASLAEIDIYSRRLSQDTGLEISEEINEEDLRDCFFDDVENIPAVTTWNTYLRYITVHKSLMFVLIWCLVVFLAEVAASLVVLCLFPKILFQDKGNSTKSANNSYAVIITSTSSYYIFYIYVGVADTLLALGLFRGLPLVHTLITVSKTLHHKMLQSVLQAPMSTLNTLKTGGILNRFSKDIAVLDDLLPLTIFDFVQLLLIVIGAVVVVSVLQPYIFLATVPVIAAFILLRAYFLHTSQQLKQLESEGRSPIFTHLVTSLKGLWTLRAFGRQPYFETLFHKALNLHTANWFLYLSTLRWFQMRIEMIFVIFFIAVTFISILTTGEGEGRVGIILTLAMNIMGTLQWAVNSSIDVDSLMRSVSRVFKFIDMPTEDGKPNNSFRPSKDSQLSKVMIIENQHVKKDDIWPSGGQMTVKDLTAKYIDGGNAILENISFSISPGQRVGLLGRTGSGKSTLLLAFLRLLNTKGEIQIDGVSWDSITLQQWRKAFGVIPQKVFIFSGTFRKNLDPYGQWSDQEIWKVADEVGLRSVIEQFPGKLDFVLVDGGCVLSHGHKQLMCLARSVLSKAKILLLDEPSAHLDPITYQIIRRTLKQAFADCTVILSEHRIEAMLECQRFLVIEENKVRQYDSIQRMLSEKSLFRQAISPADRLKLLPQRNSSRQKSRSNIAALKEETEEEVQETKL.

Over 1–77 (MQRSPLEKAS…KLINALRRCF (77 aa)) the chain is Cytoplasmic. A helical transmembrane segment spans residues 78-98 (FWRFMFYGIILYLGEVTKAVQ). An ABC transmembrane type-1 1 domain is found at 81–365 (FMFYGIILYL…WAVQTWYDSL (285 aa)). Topologically, residues 99 to 122 (PLLLGRIIASYDPDNKVERSIAIY) are extracellular. A helical transmembrane segment spans residues 123–146 (LGIGLCLLFIVRTLLLHPAIFGLH). The Cytoplasmic portion of the chain corresponds to 147 to 195 (HIGMQMRIAMFSLIYKKTLKLSSRVLDKISIGQLVSLLSNNLNKFDEGL). Residues 196–216 (ALAHFVWIAPLQVTLLMGLLW) form a helical membrane-spanning segment. At 217-222 (ELLQAF) the chain is on the extracellular side. A helical membrane pass occupies residues 223 to 243 (TFCGLAFLVVLAFLQAGLGKM). The Cytoplasmic segment spans residues 244 to 298 (MMKYRDQRAGKINERLVITSEIIENIQSVKAYCWEEAMEKIIENLRQTELKLTRK). A helical transmembrane segment spans residues 299–319 (AAYVRYLNSSAFFFSGFFVVF). Topologically, residues 320–339 (LSVLPYALLKGIILRKIFTT) are extracellular. The helical transmembrane segment at 340 to 358 (ISFCIVLRMAVTRQFPWAV) threads the bilayer. The Cytoplasmic segment spans residues 359-858 (QTWYDSLGAI…YLRYITVHKS (500 aa)). ATP is bound by residues tryptophan 401, 457 to 464 (GSTGAGKT), and glutamine 492. The ABC transporter 1 domain occupies 423–645 (NGDNNLFFSN…RPDFSSKLMG (223 aa)). The S-palmitoyl cysteine moiety is linked to residue cysteine 523. Phosphoserine occurs at positions 548 and 659. The segment at 653–831 (TAERRNSIIT…EEINEEDLRD (179 aa)) is disordered R region. At serine 669 the chain carries Phosphoserine; by PKA. Position 685 is a phosphoserine (serine 685). A Glycyl lysine isopeptide (Lys-Gly) (interchain with G-Cter in ubiquitin) cross-link involves residue lysine 687. Residues serine 699 and serine 711 each carry the phosphoserine modification. Threonine 716 is subject to Phosphothreonine. Residues serine 736, serine 767, serine 790, serine 795, and serine 813 each carry the phosphoserine modification. A helical transmembrane segment spans residues 859 to 879 (LMFVLIWCLVVFLAEVAASLV). The ABC transmembrane type-1 2 domain maps to 859 to 1155 (LMFVLIWCLV…AVNSSIDVDS (297 aa)). The Extracellular segment spans residues 880-918 (VLCLFPKILFQDKGNSTKSANNSYAVIITSTSSYYIFYI). N-linked (GlcNAc...) asparagine glycans are attached at residues asparagine 894 and asparagine 900. A discontinuously helical membrane pass occupies residues 919–939 (YVGVADTLLALGLFRGLPLVH). Residues 940 to 990 (TLITVSKTLHHKMLQSVLQAPMSTLNTLKTGGILNRFSKDIAVLDDLLPLT) lie on the Cytoplasmic side of the membrane. The helical transmembrane segment at 991-1011 (IFDFVQLLLIVIGAVVVVSVL) threads the bilayer. Over 1012 to 1013 (QP) the chain is Extracellular. The helical transmembrane segment at 1014–1034 (YIFLATVPVIAAFILLRAYFL) threads the bilayer. Over 1035 to 1095 (HTSQQLKQLE…TANWFLYLST (61 aa)) the chain is Cytoplasmic. Residues 1096–1116 (LRWFQMRIEMIFVIFFIAVTF) form a helical membrane-spanning segment. Over 1117-1130 (ISILTTGEGEGRVG) the chain is Extracellular. Residues 1131–1151 (IILTLAMNIMGTLQWAVNSSI) form a helical membrane-spanning segment. At 1152 to 1481 (DVDSLMRSVS…TEEEVQETKL (330 aa)) the chain is on the cytoplasmic side. The ABC transporter 2 domain maps to 1211–1444 (MTVKDLTAKY…KSLFRQAISP (234 aa)). ATP is bound by residues tyrosine 1220 and 1245-1252 (GRTGSGKS). The tract at residues 1387–1481 (RTLKQAFADC…TEEEVQETKL (95 aa)) is interaction with GORASP2. Cysteine 1396 carries S-palmitoyl cysteine lipidation. The tract at residues 1452 to 1481 (PQRNSSRQKSRSNIAALKEETEEEVQETKL) is disordered. The span at 1453–1464 (QRNSSRQKSRSN) shows a compositional bias: low complexity. At serine 1457 the chain carries Phosphoserine. Residues 1471–1481 (ETEEEVQETKL) show a composition bias toward acidic residues. The PDZ-binding signature appears at 1479–1481 (TKL).

This sequence belongs to the ABC transporter superfamily. ABCC family. CFTR transporter (TC 3.A.1.202) subfamily. As to quaternary structure, monomer; does not require oligomerization for channel activity. May form oligomers in the membrane. Interacts with SLC26A3, SLC26A6 and NHERF1. Interacts with SHANK2. Interacts with MYO6. Interacts (via C-terminus) with GOPC (via PDZ domain); this promotes CFTR internalization and thereby decreases channel activity. Interacts with SLC4A7 through NHERF1. Found in a complex with MYO5B and RAB11A. Interacts with ANO1. Interacts with SLC26A8. Interacts with AHCYL1; the interaction increases CFTR activity. Interacts with CSE1L. The core-glycosylated form interacts with GORASP2 (via PDZ GRASP-type 1 domain) in respone to ER stress. Interacts with MARCHF2; the interaction leads to CFTR ubiqtuitination and degradation. Interacts with ADGRG2. In terms of processing, N-glycosylated. Phosphorylated; cAMP treatment promotes phosphorylation and activates the channel. Dephosphorylation decreases the ATPase activity (in vitro). Phosphorylation at PKA sites activates the channel. Phosphorylation at PKC sites enhances the response to phosphorylation by PKA. Phosphorylated by AMPK; this inhibits channel activity. Post-translationally, ubiquitinated, leading to its degradation in the lysosome. Deubiquitination by USP10 in early endosomes enhances its endocytic recycling to the cell membrane. Ubiquitinated by RNF185 during ER stress. Ubiquitinated by MARCHF2.

It is found in the apical cell membrane. Its subcellular location is the early endosome membrane. The protein localises to the cell membrane. It localises to the recycling endosome membrane. The protein resides in the endoplasmic reticulum membrane. It is found in the nucleus. It carries out the reaction ATP + H2O + closed Cl(-) channel = ADP + phosphate + open Cl(-) channel.. It catalyses the reaction chloride(in) = chloride(out). The enzyme catalyses hydrogencarbonate(in) = hydrogencarbonate(out). The catalysed reaction is ATP + H2O = ADP + phosphate + H(+). Epithelial ion channel that plays an important role in the regulation of epithelial ion and water transport and fluid homeostasis. Mediates the transport of chloride ions across the cell membrane. Possesses an intrinsic ATPase activity and utilizes ATP to gate its channel; the passive flow of anions through the channel is gated by cycles of ATP binding and hydrolysis by the ATP-binding domains. The ion channel is also permeable to HCO(3)(-); selectivity depends on the extracellular chloride concentration. Exerts its function also by modulating the activity of other ion channels and transporters. Contributes to the regulation of the pH and the ion content of the epithelial fluid layer. Modulates the activity of the epithelial sodium channel (ENaC) complex, in part by regulating the cell surface expression of the ENaC complex. May regulate bicarbonate secretion and salvage in epithelial cells by regulating the transporter SLC4A7. Can inhibit the chloride channel activity of ANO1. Plays a role in the chloride and bicarbonate homeostasis during sperm epididymal maturation and capacitation. The polypeptide is Cystic fibrosis transmembrane conductance regulator (Muntiacus muntjak (Barking deer)).